The sequence spans 202 residues: Imidazoleglycerol-phosphate dehydratase (202 aa).

The protein belongs to the imidazoleglycerol-phosphate dehydratase family.

The protein resides in the cytoplasm. It catalyses the reaction D-erythro-1-(imidazol-4-yl)glycerol 3-phosphate = 3-(imidazol-4-yl)-2-oxopropyl phosphate + H2O. The protein operates within amino-acid biosynthesis; L-histidine biosynthesis; L-histidine from 5-phospho-alpha-D-ribose 1-diphosphate: step 6/9. The polypeptide is Imidazoleglycerol-phosphate dehydratase (Chelativorans sp. (strain BNC1)).